The primary structure comprises 827 residues: Discs large homolog 1-like protein (827 aa).

Disordered stretches follow at residues 38-61 (HQDE…TPGP) and 102-133 (SPVV…ANPP). Positions 44-56 (GSPQEPSSPQFTD) are enriched in polar residues. PDZ domains follow at residues 159–246 (EITL…RRRK), 254–341 (EIKL…AKPN), and 403–484 (KVVL…QYRP). An SH3 domain is found at 518–588 (KRSLYVRALF…PSKRRVEKKE (71 aa)). The disordered stretch occupies residues 595–618 (VKFNSKSREKGDNPDDMLSKGQSG). Residues 637–812 (SRPVIILGPM…IYDQVKQIIE (176 aa)) form the Guanylate kinase-like domain.

The protein belongs to the MAGUK family.

The protein resides in the membrane. Functionally, may play a role in synapse assembly and function. The sequence is that of Discs large homolog 1-like protein (dlg1l) from Danio rerio (Zebrafish).